The chain runs to 1033 residues: E3 ubiquitin-protein ligase Topors (1033 aa).

Residues 1–10 (MGSQPPPPGS) are compositionally biased toward pro residues. A disordered region spans residues 1 to 36 (MGSQPPPPGSPLSREEGEAPPLVPAEEGRRRSRRVR). The tract at residues 52-376 (ELASNGPAVP…MAAFDQHANY (325 aa)) is required for DNA-binding. Glycyl lysine isopeptide (Lys-Gly) (interchain with G-Cter in SUMO2) cross-links involve residues Lys74, Lys77, Lys84, and Lys89. Ser99 is subject to Phosphoserine. The segment at 104–143 (CPICLDRFDNVSYLDRCLHKFCFRCVQEWSKNKAECPLCK) adopts an RING-type zinc-finger fold. Lys160 is covalently cross-linked (Glycyl lysine isopeptide (Lys-Gly) (interchain with G-Cter in SUMO2)). Ser196 is modified (phosphoserine). Residue Lys251 forms a Glycyl lysine isopeptide (Lys-Gly) (interchain with G-Cter in SUMO2) linkage. Disordered regions lie at residues 414–477 (QAPW…SSSD) and 496–692 (VELS…RYYL). Low complexity predominate over residues 434-444 (VGVSSLLNSSD). The interval 438-574 (SLLNSSDSSD…RSTSLPAPRD (137 aa)) is sumoylation and localization to discrete nuclear foci. An interaction with SUMO1 region spans residues 438–654 (SLLNSSDSSD…RSRTRDSSWS (217 aa)). Residues 455 to 464 (TTSQIQGVQT) are compositionally biased toward polar residues. The interaction with p53/TP53 stretch occupies residues 457–731 (SQIQGVQTND…RRTLSRAHYS (275 aa)). The interaction with TOP1 stretch occupies residues 457-879 (SQIQGVQTND…GKATDTSKHH (423 aa)). Positions 465–477 (NDDVNNDSDSSSD) are enriched in low complexity. A Phosphoserine modification is found at Ser500. Positions 507 to 518 (PYEKVETVKTQE) are enriched in basic and acidic residues. The segment covering 522–535 (SYSSGDSDVSRASS) has biased composition (low complexity). Positions 540 to 566 (LGKDEQMSKSHCDSDTRISSKKEEKRS) are enriched in basic and acidic residues. Residue Lys561 forms a Glycyl lysine isopeptide (Lys-Gly) (interchain with G-Cter in SUMO) linkage. At Ser585 the chain carries Phosphoserine. Basic residues-rich tracts occupy residues 613–629 (RNHR…KRSR) and 637–647 (PRARKDKKRSR). Low complexity predominate over residues 654-669 (SRRSQTLSLSSGSTSR). Lys701 participates in a covalent cross-link: Glycyl lysine isopeptide (Lys-Gly) (interchain with G-Cter in SUMO2). 2 disordered regions span residues 713–934 (RDGY…PIQD) and 970–1033 (TVEN…CDVS). At Ser718 the chain carries Phosphoserine; by PLK1. The span at 721 to 730 (RRRTLSRAHY) shows a compositional bias: basic residues. Residues 731 to 747 (SRQSSSPEFRIQSFSER) are compositionally biased toward polar residues. Residue Ser734 is modified to Phosphoserine. A compositionally biased stretch (low complexity) spans 770–780 (SVSSNRSRTTS). Basic and acidic residues predominate over residues 815-837 (FTSKGKDSHYQKSKLDGSYKNES). Glycyl lysine isopeptide (Lys-Gly) (interchain with G-Cter in SUMO2) cross-links involve residues Lys818 and Lys834. Over residues 851 to 860 (KHKRRRRRTR) the composition is skewed to basic residues. Residues 851–914 (KHKRRRRRTR…ITIDSDSDGE (64 aa)) form an interaction with UBE2I region. 2 positions are modified to phosphoserine: Ser861 and Ser863. A compositionally biased stretch (basic residues) spans 877-894 (KHHKKKKKKHKKKHKKHH). Phosphoserine is present on residues Ser909, Ser911, Ser999, Ser1016, and Ser1025. A compositionally biased stretch (polar residues) spans 992 to 1008 (TFASDLESQSSNVSIQA).

In terms of assembly, interacts with TOP1. Interacts with the SUMO1 conjugating enzyme UBE2I. Interacts with SUMO1. Interacts with NKX3-1; polyubiquitinates NKX3-1 and induces its proteasomal degradation. Interacts with SIN3A; sumoylates SIN3A. Interacts with IKBKE; induced by DNA damage. Interacts with p53/TP53. Interacts with PARK7/DJ-1. Post-translationally, phosphorylation at Ser-99 regulates the E3 ubiquitin-protein ligase activity but not the SUMO1-protein ligase activity. Phosphorylation at Ser-718 increases the E3 ubiquitin-protein ligase activity versus the E3 SUMO1-protein ligase activity resulting in increased p53/TP53 ubiquitination and degradation. Sumoylated.

Its subcellular location is the nucleus. It localises to the PML body. It carries out the reaction S-ubiquitinyl-[E2 ubiquitin-conjugating enzyme]-L-cysteine + [acceptor protein]-L-lysine = [E2 ubiquitin-conjugating enzyme]-L-cysteine + N(6)-ubiquitinyl-[acceptor protein]-L-lysine.. In terms of biological role, functions as an E3 ubiquitin-protein ligase and as a E3 SUMO1-protein ligase. Probable tumor suppressor involved in cell growth, cell proliferation and apoptosis that regulates p53/TP53 stability through ubiquitin-dependent degradation. May regulate chromatin modification through sumoylation of several chromatin modification-associated proteins. May be involved in DNA-damage-induced cell death through IKBKE sumoylation. The polypeptide is E3 ubiquitin-protein ligase Topors (Topors) (Mus musculus (Mouse)).